Reading from the N-terminus, the 600-residue chain is Lamin-B2 (600 aa).

The tract at residues 2 to 27 (SGTPIRGTPGGTPLSPTRISRLQEKE) is head. Position 16 is a phosphoserine; by CDK1 (serine 16). Positions 25–381 (EKEELRQLND…KLLEGEEERL (357 aa)) constitute an IF rod domain. A coil 1A region spans residues 28 to 64 (ELRQLNDRLAVYIDRVRALELENDRLLVKISEKEEVT). The tract at residues 75–212 (YESELADARR…NVFEEEIRET (138 aa)) is coil 1B. Residues 237–379 (QALEDLRNQH…YRKLLEGEEE (143 aa)) form a coil 2 region. Disordered regions lie at residues 377 to 449 (EEER…QMSQ) and 568 to 600 (ENEEEEDEADFGEEDLFNQQGDPRTTSRGCLVM). Residues 380–600 (RLKLSPSPSS…RTTSRGCLVM (221 aa)) are tail. Low complexity predominate over residues 383-410 (LSPSPSSRVTVSRATSSSSSSSTSLVRS). Serine 386 carries the post-translational modification Phosphoserine. The Nuclear localization signal motif lies at 414–419 (KRRRIE). Residues 445-562 (FQMSQQASAT…EEVAVRTVTK (118 aa)) form the LTD domain. The segment covering 569–583 (NEEEEDEADFGEEDL) has biased composition (acidic residues). Positions 584-600 (FNQQGDPRTTSRGCLVM) are enriched in polar residues. Cysteine 597 bears the Cysteine methyl ester mark. Cysteine 597 is lipidated: S-farnesyl cysteine. A propeptide spans 598–600 (LVM) (removed in mature form).

Belongs to the intermediate filament family. In terms of assembly, homodimer. Lamin dimers then assemble into dimeric head-to-tail polymers. Ultimately, two head-to-tail polymers assemble laterally into a protofilament with a uniformly shaped rod of 3.5 nm in diameter. Post-translationally, phosphorylation plays a key role in lamin organization, subcellular localization and nuclear envelope disintegration. Phosphorylation by CDK1 at Ser-16 at the onset of mitosis drives lamin disassembly and nuclear envelope breakdown.

Its subcellular location is the nucleus lamina. The protein localises to the nucleus envelope. The protein resides in the nucleus. It is found in the nucleoplasm. It localises to the nucleus matrix. Its function is as follows. Lamins are intermediate filament proteins that assemble into a filamentous meshwork, and which constitute the major components of the nuclear lamina, a fibrous layer on the nucleoplasmic side of the inner nuclear membrane. Lamins provide a framework for the nuclear envelope, bridging the nuclear envelope and chromatin. Plays an important role in nuclear assembly, chromatin organization, nuclear membrane and telomere dynamics. This is Lamin-B2 (LMNB2) from Gallus gallus (Chicken).